The chain runs to 457 residues: Argininosuccinate lyase (457 aa).

It belongs to the lyase 1 family. Argininosuccinate lyase subfamily.

It localises to the cytoplasm. The enzyme catalyses 2-(N(omega)-L-arginino)succinate = fumarate + L-arginine. The protein operates within amino-acid biosynthesis; L-arginine biosynthesis; L-arginine from L-ornithine and carbamoyl phosphate: step 3/3. The chain is Argininosuccinate lyase from Psychrobacter cryohalolentis (strain ATCC BAA-1226 / DSM 17306 / VKM B-2378 / K5).